We begin with the raw amino-acid sequence, 1442 residues long: DNA polymerase III PolC-type (1442 aa).

The Exonuclease domain maps to 409 to 568 (YVIFDIETTG…YDAIVLADVF (160 aa)).

This sequence belongs to the DNA polymerase type-C family. PolC subfamily.

The protein localises to the cytoplasm. The enzyme catalyses DNA(n) + a 2'-deoxyribonucleoside 5'-triphosphate = DNA(n+1) + diphosphate. Functionally, required for replicative DNA synthesis. This DNA polymerase also exhibits 3' to 5' exonuclease activity. This Ureaplasma parvum serovar 3 (strain ATCC 700970) protein is DNA polymerase III PolC-type.